The primary structure comprises 1342 residues: DNA-directed RNA polymerase subunit beta (1342 aa).

Belongs to the RNA polymerase beta chain family. As to quaternary structure, the RNAP catalytic core consists of 2 alpha, 1 beta, 1 beta' and 1 omega subunit. When a sigma factor is associated with the core the holoenzyme is formed, which can initiate transcription.

It catalyses the reaction RNA(n) + a ribonucleoside 5'-triphosphate = RNA(n+1) + diphosphate. In terms of biological role, DNA-dependent RNA polymerase catalyzes the transcription of DNA into RNA using the four ribonucleoside triphosphates as substrates. In Buchnera aphidicola subsp. Acyrthosiphon pisum (strain 5A), this protein is DNA-directed RNA polymerase subunit beta.